We begin with the raw amino-acid sequence, 243 residues long: Ubiquinone biosynthesis O-methyltransferase (243 aa).

Residues R44, G64, D85, and M129 each contribute to the S-adenosyl-L-methionine site.

The protein belongs to the methyltransferase superfamily. UbiG/COQ3 family.

The enzyme catalyses a 3-demethylubiquinol + S-adenosyl-L-methionine = a ubiquinol + S-adenosyl-L-homocysteine + H(+). The catalysed reaction is a 3-(all-trans-polyprenyl)benzene-1,2-diol + S-adenosyl-L-methionine = a 2-methoxy-6-(all-trans-polyprenyl)phenol + S-adenosyl-L-homocysteine + H(+). It participates in cofactor biosynthesis; ubiquinone biosynthesis. Its function is as follows. O-methyltransferase that catalyzes the 2 O-methylation steps in the ubiquinone biosynthetic pathway. The sequence is that of Ubiquinone biosynthesis O-methyltransferase from Erwinia tasmaniensis (strain DSM 17950 / CFBP 7177 / CIP 109463 / NCPPB 4357 / Et1/99).